Consider the following 1004-residue polypeptide: MGLFGKDRGERIAEFPCYLLETGTHLVPLPGILYNLVIERTYGERILGQFRGIGEAVDGALTGAGEAAEVPGRVAEVMKAFQERYDSGDKTQAVYICLVTEAAAGRHIGCIARLTGARAEGGELSVLLRGLVRAVVGQPVPSRRNEMWNGSVTVLDDAQRVATWGARQLDFARQGVFGAFEELDAGIGTFTARFKSSQKRGADGAAHLLTLSPLANTLFFHFSRSSFERSWKILRTMMHGFRDAKKDIRTAMDMLSVADLTVGLLPTTTAQRLEFLQAEDPAARIKTFVRHMQQLLEVFGSLYRATEYVHDRFETHGPIAKSQLIANQLRSLRFYIDDIKRNKPESGPGGRSRRLLPRPASGNSAAAGEEDDSEDSELVAIKRYVDEIEVKGVHADGVKMLKKDYRSLSKMHVQSTEYQMLRNYFDFIMGIPFGIYVSTPEIDLVASSRKLDNDHYGLVQVKKRLLEYLCVLKLSANSPGVTADAGAIEDGSATKRAVVYENKAQEQRKTKVPFLLLVGPPGVGKTSVAKSVADVLGRRFQRISLGGIHNEAEIRGHRRTYVGAMAGMIVNALCKAGCMNPLILLDEIDKVLSVPAGAGASRLNGDPGAALLEVLDPEQNHTFTDHYVGFPVDLSQVLFFCTANDLSGMSEPLVDRMEVIHIEGYTYEEKIAIGRHFLLPKQIRLNSFDMTGINLSLTDDAWRTVVVDYTREAGVRNLDRQLGAIVRGKIVEYVENNMSGSGDDVVTQKNLPKFLGLPPHSLREEVTQTTSFAEKYGVVHGLSYNSDGTGGVLVFEVIRSGDSRDKRLTVQTTGNLGTVLSESVSIATSLVKSLLARHVVHSSADDTSVAEFFRSECHLHVPFGAVPKDGPSAGAAISLALLSLALKRPVDPALCVTGEITLRGKILPVGGVKEKLLAAQLQGMGLALVPRGNRNDLVELAEDNAETQQRLLADPALPELATLQHKLGMAVHYCSDFRDLVLHAWPTADNLWHACEDSSVRPQL.

In terms of domain architecture, Lon N-terminal spans 15-296 (FPCYLLETGT…TFVRHMQQLL (282 aa)). Residues 340-374 (KRNKPESGPGGRSRRLLPRPASGNSAAAGEEDDSE) are disordered. Over residues 357 to 367 (PRPASGNSAAA) the composition is skewed to low complexity. 519–526 (GPPGVGKT) is a binding site for ATP. One can recognise a Lon proteolytic domain in the interval 773-987 (AEKYGVVHGL…RDLVLHAWPT (215 aa)). Catalysis depends on residues S872 and K915. A Microbody targeting signal motif is present at residues 1002 to 1004 (PQL).

Belongs to the peptidase S16 family.

Its subcellular location is the peroxisome matrix. It carries out the reaction Hydrolysis of proteins in presence of ATP.. Its function is as follows. ATP-dependent serine protease that mediates the selective degradation of misfolded and unassembled polypeptides in the peroxisomal matrix. Necessary for type 2 peroxisome targeting signal (PTS2)-containing protein processing and facilitates peroxisome matrix protein import. The protein is Lon protease homolog 2, peroxisomal of Eremothecium gossypii (strain ATCC 10895 / CBS 109.51 / FGSC 9923 / NRRL Y-1056) (Yeast).